The sequence spans 745 residues: Inhibitor of nuclear factor kappa-B kinase subunit alpha (745 aa).

Residues 15 to 302 (WEMRERLGTG…LTLKQPRCFV (288 aa)) form the Protein kinase domain. ATP is bound by residues 21 to 29 (LGTGGFGNV) and Lys44. At Thr23 the chain carries Phosphothreonine; by PKB/AKT1 and SGK1. The active-site Proton acceptor is the Asp144. At Ser176 the chain carries Phosphoserine; by MAP3K14. Thr179 is modified ((Microbial infection) O-acetylthreonine; by Yersinia YopJ). The residue at position 180 (Ser180) is a Phosphoserine; by SGK1. The leucine-zipper stretch occupies residues 455–476 (LLRYNANLTKMKNTLISASQQL). The interval 738–743 (LDWSWL) is NEMO-binding.

This sequence belongs to the protein kinase superfamily. Ser/Thr protein kinase family. I-kappa-B kinase subfamily. As to quaternary structure, component of the I-kappa-B-kinase (IKK) core complex consisting of CHUK, IKBKB and IKBKG; probably four alpha/CHUK-beta/IKBKB dimers are associated with four gamma/IKBKG subunits. The IKK core complex seems to associate with regulatory or adapter proteins to form a IKK-signalosome holo-complex. The IKK complex associates with TERF2IP/RAP1, leading to promote IKK-mediated phosphorylation of RELA/p65. Part of a complex composed of NCOA2, NCOA3, CHUK/IKKA, IKBKB, IKBKG and CREBBP. Part of a 70-90 kDa complex at least consisting of CHUK/IKKA, IKBKB, NFKBIA, RELA, ELP1 and MAP3K14. Directly interacts with TRPC4AP. May interact with TRAF2. Interacts with NALP2. May interact with MAVS/IPS1. Interacts with ARRB1 and ARRB2. Interacts with NLRC5; prevents CHUK phosphorylation and kinase activity. Interacts with PIAS1; this interaction induces PIAS1 phosphorylation. Interacts with ZNF268 isoform 2; the interaction is further increased in a TNF-alpha-dependent manner. Interacts with FOXO3. Interacts with IFIT5; the interaction synergizes the recruitment of IKK to MAP3K7 and enhances IKK phosphorylation. Interacts with LRRC14. Interacts with SASH1. Directly interacts with DDX3X after the physiological activation of the TLR7 and TLR8 pathways; this interaction enhances CHUK autophosphorylation. In terms of assembly, (Microbial infection) Interacts with InlC of Listeria monocytogenes. Post-translationally, phosphorylated by MAP3K14/NIK, AKT and to a lesser extent by MEKK1, and dephosphorylated by PP2A. Autophosphorylated. In terms of processing, ubiquitinated by TRIM56 via 'Lys-63'-linked ubiquitination, promoting activation of CHUK/IKKA. (Microbial infection) Acetylation of Thr-179 by Yersinia YopJ prevents phosphorylation and activation, thus blocking the I-kappa-B signaling pathway. As to expression, widely expressed.

Its subcellular location is the cytoplasm. It localises to the nucleus. It carries out the reaction L-seryl-[I-kappa-B protein] + ATP = O-phospho-L-seryl-[I-kappa-B protein] + ADP + H(+). Its activity is regulated as follows. Activated when phosphorylated and inactivated when dephosphorylated. Its function is as follows. Serine kinase that plays an essential role in the NF-kappa-B signaling pathway which is activated by multiple stimuli such as inflammatory cytokines, bacterial or viral products, DNA damages or other cellular stresses. Acts as a part of the canonical IKK complex in the conventional pathway of NF-kappa-B activation and phosphorylates inhibitors of NF-kappa-B on serine residues. These modifications allow polyubiquitination of the inhibitors and subsequent degradation by the proteasome. In turn, free NF-kappa-B is translocated into the nucleus and activates the transcription of hundreds of genes involved in immune response, growth control, or protection against apoptosis. Negatively regulates the pathway by phosphorylating the scaffold protein TAXBP1 and thus promoting the assembly of the A20/TNFAIP3 ubiquitin-editing complex (composed of A20/TNFAIP3, TAX1BP1, and the E3 ligases ITCH and RNF11). Therefore, CHUK plays a key role in the negative feedback of NF-kappa-B canonical signaling to limit inflammatory gene activation. As part of the non-canonical pathway of NF-kappa-B activation, the MAP3K14-activated CHUK/IKKA homodimer phosphorylates NFKB2/p100 associated with RelB, inducing its proteolytic processing to NFKB2/p52 and the formation of NF-kappa-B RelB-p52 complexes. In turn, these complexes regulate genes encoding molecules involved in B-cell survival and lymphoid organogenesis. Also participates in the negative feedback of the non-canonical NF-kappa-B signaling pathway by phosphorylating and destabilizing MAP3K14/NIK. Within the nucleus, phosphorylates CREBBP and consequently increases both its transcriptional and histone acetyltransferase activities. Modulates chromatin accessibility at NF-kappa-B-responsive promoters by phosphorylating histones H3 at 'Ser-10' that are subsequently acetylated at 'Lys-14' by CREBBP. Additionally, phosphorylates the CREBBP-interacting protein NCOA3. Also phosphorylates FOXO3 and may regulate this pro-apoptotic transcription factor. Phosphorylates RIPK1 at 'Ser-25' which represses its kinase activity and consequently prevents TNF-mediated RIPK1-dependent cell death. Phosphorylates AMBRA1 following mitophagy induction, promoting AMBRA1 interaction with ATG8 family proteins and its mitophagic activity. The polypeptide is Inhibitor of nuclear factor kappa-B kinase subunit alpha (CHUK) (Homo sapiens (Human)).